A 101-amino-acid chain; its full sequence is Large ribosomal subunit protein uL23 (101 aa).

This sequence belongs to the universal ribosomal protein uL23 family. In terms of assembly, part of the 50S ribosomal subunit. Contacts protein L29, and trigger factor when it is bound to the ribosome.

Functionally, one of the early assembly proteins it binds 23S rRNA. One of the proteins that surrounds the polypeptide exit tunnel on the outside of the ribosome. Forms the main docking site for trigger factor binding to the ribosome. The sequence is that of Large ribosomal subunit protein uL23 from Histophilus somni (strain 129Pt) (Haemophilus somnus).